The sequence spans 231 residues: Phosphoribosylformylglycinamidine synthase subunit PurQ (231 aa).

The Glutamine amidotransferase type-1 domain maps to 7-231; sequence GVVVFPGSNC…RLFASLFRQL (225 aa). Catalysis depends on cysteine 89, which acts as the Nucleophile. Residues histidine 206 and glutamate 208 contribute to the active site.

Part of the FGAM synthase complex composed of 1 PurL, 1 PurQ and 2 PurS subunits.

The protein localises to the cytoplasm. The enzyme catalyses N(2)-formyl-N(1)-(5-phospho-beta-D-ribosyl)glycinamide + L-glutamine + ATP + H2O = 2-formamido-N(1)-(5-O-phospho-beta-D-ribosyl)acetamidine + L-glutamate + ADP + phosphate + H(+). It carries out the reaction L-glutamine + H2O = L-glutamate + NH4(+). It functions in the pathway purine metabolism; IMP biosynthesis via de novo pathway; 5-amino-1-(5-phospho-D-ribosyl)imidazole from N(2)-formyl-N(1)-(5-phospho-D-ribosyl)glycinamide: step 1/2. Its function is as follows. Part of the phosphoribosylformylglycinamidine synthase complex involved in the purines biosynthetic pathway. Catalyzes the ATP-dependent conversion of formylglycinamide ribonucleotide (FGAR) and glutamine to yield formylglycinamidine ribonucleotide (FGAM) and glutamate. The FGAM synthase complex is composed of three subunits. PurQ produces an ammonia molecule by converting glutamine to glutamate. PurL transfers the ammonia molecule to FGAR to form FGAM in an ATP-dependent manner. PurS interacts with PurQ and PurL and is thought to assist in the transfer of the ammonia molecule from PurQ to PurL. The chain is Phosphoribosylformylglycinamidine synthase subunit PurQ from Chlorobium luteolum (strain DSM 273 / BCRC 81028 / 2530) (Pelodictyon luteolum).